Reading from the N-terminus, the 281-residue chain is 2-dehydro-3-deoxyphosphooctonate aldolase (281 aa).

It belongs to the KdsA family.

It localises to the cytoplasm. The catalysed reaction is D-arabinose 5-phosphate + phosphoenolpyruvate + H2O = 3-deoxy-alpha-D-manno-2-octulosonate-8-phosphate + phosphate. It participates in carbohydrate biosynthesis; 3-deoxy-D-manno-octulosonate biosynthesis; 3-deoxy-D-manno-octulosonate from D-ribulose 5-phosphate: step 2/3. It functions in the pathway bacterial outer membrane biogenesis; lipopolysaccharide biosynthesis. This is 2-dehydro-3-deoxyphosphooctonate aldolase from Pseudomonas paraeruginosa (strain DSM 24068 / PA7) (Pseudomonas aeruginosa (strain PA7)).